The following is a 617-amino-acid chain: MALLQIAEPGQSSAPHEHKRAAGIDLGTTNSLVASVRSGTADTLKDAQGRSLLPSIVNYANEEAIVGYAAKALSESQPQDTIISVKRLLGRSLTDIQTRYPSLPYRFKASENGLPVLQTTQGDKNPIEVSADILKVLAKRAEESLGGELSGVVITVPAYFDDAQRAGTKDAAKLAGLHVLRLLNEPTAAAIAYGLDSGQEGVIAVYDLGGGTFDISILRLSKGVFEVLATGGDSALGGDDFDHLLADFLAEQVGLETPLSAEKNRTLLNIATATKIAFSEQDSVEVEVFGWKGVVTREQFEELIRPLVKKTLMSCRRALKDADVEADEVLEVVMVGGSTRTLLVREMVGEFFGRTPLTNINPDEVVAIGAGIQADILAGNKPDSEMLLLDVIPLSLGIETMGGLVEKIIPRNTTIPVARAQEFTTFKDGQTAMSVHIVQGEREMVDDCRSLARFSLKGIPPMAAGAAHIRVTYQVDADGLLSVTAMEKSTGVQSEIQVKPSYGLSDDEVANMLRDSMTYAKEDMQARALAEQRVEADRVIEGLIAAMQADGDELLSEAEKATLLQAIESLIELRNGNEANAIEQGIKDTDKASQDFASRRMDKSIRAALAGQSIDTI.

The disordered stretch occupies residues 1–23; sequence MALLQIAEPGQSSAPHEHKRAAG.

Belongs to the heat shock protein 70 family.

In terms of biological role, chaperone involved in the maturation of iron-sulfur cluster-containing proteins. Has a low intrinsic ATPase activity which is markedly stimulated by HscB. This chain is Chaperone protein HscA homolog, found in Vibrio vulnificus (strain YJ016).